We begin with the raw amino-acid sequence, 442 residues long: Mannosylglycerate hydrolase (442 aa).

Substrate contacts are provided by residues Y38, 42-45, Y90, Q116, and G176; that span reads WSWD. The Proton donor role is filled by D178. Substrate contacts are provided by residues R213 and 369-370; that span reads YW. The active-site Proton acceptor is E413.

It belongs to the glycosyl hydrolase 63 family. As to quaternary structure, homodimer in solution.

It catalyses the reaction (2R)-2-O-(alpha-D-mannosyl)-glycerate + H2O = D-mannose + (R)-glycerate. The enzyme catalyses (2R)-2-O-(alpha-D-glucopyranosyl)-glycerate + H2O = (R)-glycerate + D-glucose. Its activity is regulated as follows. Activity is not stimulated by divalent cations and not affected in the presence of EDTA. Functionally, hydrolase that catalyzes the hydrolysis of mannosylglycerate (MG), a solute produced in response to osmotic stress in thermophiles, into mannose and glycerate. Can also hydrolyze glucosylglycerate (GG) to glucose and glycerate, with similar catalytic efficiency. Is highly specific for MG and GG, and cannot use mannosylglyceramide (MGA), glucosylglycerol, mannosylglucosylglycerate (MGG), glucosylglucosylglycerate (GGG) or trehalose as substrates. This is Mannosylglycerate hydrolase from Rubrobacter radiotolerans (Arthrobacter radiotolerans).